The chain runs to 657 residues: Tyrosine-protein phosphatase vhp-1 (657 aa).

The 131-residue stretch at 21 to 151 (APDTTLVVDC…FAQQYPQLCE (131 aa)) folds into the Rhodanese domain. The Tyrosine-protein phosphatase domain occupies 175–318 (GITLITPNIY…LLEYENVLIK (144 aa)). Catalysis depends on C262, which acts as the Phosphocysteine intermediate. Disordered stretches follow at residues 353–426 (SNCV…MDLG), 539–563 (VPAG…SSSA), and 581–657 (PAST…PCHQ). The span at 366–405 (SPSSPSVSEGSAASEPETSSSAASSSSTASAPPSMPSTSE) shows a compositional bias: low complexity. The segment covering 406 to 419 (QGTSSGTVNVNGKR) has biased composition (polar residues). 2 stretches are compositionally biased toward low complexity: residues 542–563 (GSSS…SSSA) and 581–597 (PAST…TSRA).

The protein belongs to the protein-tyrosine phosphatase family. Non-receptor class dual specificity subfamily. As to quaternary structure, may interact with pmk-3. As to expression, expressed in the pharynx, intestine, neurons and vulval hypodermal cells.

The catalysed reaction is O-phospho-L-tyrosyl-[protein] + H2O = L-tyrosyl-[protein] + phosphate. Its function is as follows. Acts preferentially on the c-Jun N-terminal kinase (JNK) and p38 MAPKs. Plays an important role in the heavy metal stress response and in axon regeneration by negatively regulating the kgb-1 (JNK-like) and the pmk-1 (p38-type) MAPK signaling pathways. The protein is Tyrosine-protein phosphatase vhp-1 (vhp-1) of Caenorhabditis elegans.